We begin with the raw amino-acid sequence, 473 residues long: H(+)/Cl(-) exchange transporter ClcA (473 aa).

Over 1–32 (MKTDTPSLETPQAARLRRRQLIRQLLERDKTP) the chain is Cytoplasmic. The helical transmembrane segment at 33 to 69 (LAILFMAAVVGTLVGLAAVAFDKGVAWLQNQRMGALV) threads the bilayer. At 70–76 (HTADNYP) the chain is on the periplasmic side. Residues 77–100 (LLLTVAFLCSAVLAMFGYFLVRKY) traverse the membrane as a helical segment. The short motif at 106-110 (GSGIP) is the Selectivity filter part_1 element. Ser107 contacts chloride. The helical intramembrane region spans 109–116 (IPEIEGAL). Residues 117-123 (EDQRPVR) lie on the Cytoplasmic side of the membrane. A run of 2 helical transmembrane segments spans residues 124–141 (WWRVLPVKFFGGLGTLGG) and 148–166 (EGPTVQIGGNIGRMVLDIF). The Selectivity filter part_2 motif lies at 146 to 150 (GREGP). Residues 167 to 176 (RLKGDEARHT) are Cytoplasmic-facing. 2 consecutive intramembrane regions (helical) follow at residues 177 to 189 (LLATGAAAGLAAA) and 193 to 201 (PLAGILFII). Residues 202–214 (EEMRPQFRYTLIS) are Cytoplasmic-facing. The helical transmembrane segment at 215-232 (IKAVFIGVIMSTIMYRIF) threads the bilayer. Topologically, residues 233-252 (NHEVALIDVGKLSDAPLNTL) are periplasmic. A helical transmembrane segment spans residues 253 to 281 (WLYLILGIIFGIFGPIFNKWVLGMQDLLH). Residues 282–287 (RVHGGN) lie on the Cytoplasmic side of the membrane. The chain crosses the membrane as a helical span at residues 288–309 (ITKWVLMGGAIGGLCGLLGFVA). Topologically, residues 310–329 (PATSGGGFNLIPIATAGNFS) are periplasmic. Transmembrane regions (helical) follow at residues 330-349 (MGMLVFIFVARVITTLLCFS) and 355-376 (GIFAPMLALGTVLGTAFGMVAV). Residues 355–359 (GIFAP) carry the Selectivity filter part_3 motif. Positions 356 and 357 each coordinate chloride. The Periplasmic segment spans residues 377–386 (ELFPQYHLEA). Residues 387-401 (GTFAIAGMGALLAAS) constitute an intramembrane region (helical). Positions 402–404 (IRA) form an intramembrane region, note=Loop between two helices. An intramembrane region (helical) is located at residues 405-416 (PLTGIILVLEMT). The segment at residues 417–421 (DNYQL) is an intramembrane region (note=Loop between two helices). Residues 422–438 (ILPMIITGLGATLLAQF) traverse the membrane as a helical segment. At 439-473 (TGGKPLYSAILARTLAKQEAEQLARSKAASASENT) the chain is on the cytoplasmic side. Position 445 (Tyr445) interacts with chloride.

This sequence belongs to the chloride channel (TC 2.A.49) family. ClcA subfamily. As to quaternary structure, homodimer.

It is found in the cell inner membrane. The enzyme catalyses 2 chloride(in) + H(+)(out) = 2 chloride(out) + H(+)(in). Functionally, proton-coupled chloride transporter. Functions as antiport system and exchanges two chloride ions for 1 proton. Probably acts as an electrical shunt for an outwardly-directed proton pump that is linked to amino acid decarboxylation, as part of the extreme acid resistance (XAR) response. This Escherichia coli O139:H28 (strain E24377A / ETEC) protein is H(+)/Cl(-) exchange transporter ClcA.